A 344-amino-acid chain; its full sequence is Ras association domain-containing protein 1 (344 aa).

Ser2 is subject to N-acetylserine. Residue Ser2 is modified to Phosphoserine. The tract at residues 2–119 (SGEPELIELR…DLGWEPAVER (118 aa)) is mediates interaction with E4F1. The residue at position 36 (Arg36) is an Omega-N-methylarginine. Residues 51–105 (GHRFQPAGPATHTWCDLCGDFIWGVVRKGLQCARLSADCKFTCHYRCRALVCLDC) form a Phorbol-ester/DAG-type zinc finger. Residues 179 to 189 (SVPSSKKPPSL) are compositionally biased toward low complexity. The segment at 179 to 203 (SVPSSKKPPSLQDARRGPGRGTSVR) is disordered. The Ras-associating domain occupies 198–292 (RGTSVRRRTS…LSFVLKENDS (95 aa)). Positions 294–341 (EVNWDAFSMPELHNFLRILQREEEEHLRQILQKYSYCRQKIQEALHAC) constitute an SARAH domain. The MOAP1-binding stretch occupies residues 315–318 (EEEE).

Interacts with MAP1S. Interacts with XPA. Binds to the N-terminal of CDC20 during prometaphase. Binds to STK3/MST2 and STK4/MST1. Recruited to the TNFRSF1A and TNFRSF10A complexes in response to their respective cognate ligand, after internalization. Can self-associate. Part of a complex with MDM2, DAXX, RASSF1 and USP7. Interacts with ECM2. As to quaternary structure, interacts with MOAP1. Interacts with E4F1. Interacts with RSSF5 and probably associates with HRAS via a RSSF1 isoform A-RSSF5 heterodimer. Interacts (via C-terminus) with DAXX (via N-terminus); the interaction is independent of MDM2 and TP53. Interacts (via N-terminus) with MDM2 (via C-terminus); the interaction is independent of TP53. Interacts with RAB39A. Interacts with RAB39B; the interaction is weak. In terms of assembly, interacts (via N-terminus) with DAXX. Interacts with RAB39B; the interaction is strong. Does not interact with RAB39A. Interacts (via N-terminus) with DAXX. As to expression, isoform A and isoform C are ubiquitously expressed in all tissues tested, however isoform A is absent in many corresponding cancer cell lines. Isoform B is mainly expressed in hematopoietic cells.

The protein localises to the cytoplasm. The protein resides in the cytoskeleton. Its subcellular location is the microtubule organizing center. It is found in the centrosome. It localises to the spindle. The protein localises to the spindle pole. The protein resides in the nucleus. In terms of biological role, potential tumor suppressor. Required for death receptor-dependent apoptosis. Mediates activation of STK3/MST2 and STK4/MST1 during Fas-induced apoptosis by preventing their dephosphorylation. When associated with MOAP1, promotes BAX conformational change and translocation to mitochondrial membranes in response to TNF and TNFSF10 stimulation. Isoform A interacts with CDC20, an activator of the anaphase-promoting complex, APC, resulting in the inhibition of APC activity and mitotic progression. Inhibits proliferation by negatively regulating cell cycle progression at the level of G1/S-phase transition by regulating accumulation of cyclin D1 protein. Isoform C has been shown not to perform these roles, no function has been identified for this isoform. Isoform A disrupts interactions among MDM2, DAXX and USP7, thus contributing to the efficient activation of TP53 by promoting MDM2 self-ubiquitination in cell-cycle checkpoint control in response to DNA damage. This is Ras association domain-containing protein 1 from Homo sapiens (Human).